A 185-amino-acid polypeptide reads, in one-letter code: AP-3 complex subunit sigma (185 aa).

This sequence belongs to the adaptor complexes small subunit family. As to quaternary structure, adaptor protein complex 3 (AP-3) is a heterotetramer composed of 2 large adaptins (APL5 and APL6), a medium adaptin (APM3) and a small adaptin (APS3).

Its subcellular location is the golgi apparatus. The protein resides in the cytoplasmic vesicle membrane. Functionally, part of the AP-3 complex, an adaptor-related complex which is not clathrin-associated. The complex is associated with the Golgi region as well as more peripheral structures. It facilitates the budding of vesicles from the Golgi membrane and may be directly involved in trafficking to the vacuole. The polypeptide is AP-3 complex subunit sigma (APS3) (Eremothecium gossypii (strain ATCC 10895 / CBS 109.51 / FGSC 9923 / NRRL Y-1056) (Yeast)).